The sequence spans 372 residues: MEWQAEQAYNHLPPLPLDSKLAELAETLPILKACIPARAALAELKQAGELLPNQGLLINLLPLLEAQGSSEIENIVTTTDKLFQYAQEDSQADPMTKEALRYRTALYQGFTQLSNRPLCVTTALEICSTIKSVQMDVRKVPGTSLTNQATGEVIYTPPAGESVIRDLLSNWEAFLHNQDDVDPLIKMAMAHYQFEAIHPFIDGNGRTGRVLNILYLIDQQLLSAPILYLSRYIVAHKQDYYRLLLNVTTQQEWQPWIIFILNAVEQTAKWTTHKIAAARELIAHTTEYVRQQLPKIYSHELVQVIFEQPYCRIQNLVESGLAKRQTASVYLKQLCDIGVLEEVQSGKEKLFVHPKFVTLMTKDSNQFSRYAL.

An Inhibitory (S/T)XXXE(G/N) motif motif is present at residues 69–74 (SSEIEN). Residues E73, H198, 203-209 (GNGRTGR), and Y240 contribute to the ATP site. Residues 121–262 (TTALEICSTI…WQPWIIFILN (142 aa)) enclose the Fido domain.

In terms of assembly, homodimer.

It carries out the reaction L-tyrosyl-[protein] + ATP = O-(5'-adenylyl)-L-tyrosyl-[protein] + diphosphate. The catalysed reaction is L-threonyl-[protein] + ATP = 3-O-(5'-adenylyl)-L-threonyl-[protein] + diphosphate. Adenylyltransferase activity is inhibited by the inhibitory helix present at the N-terminus: Glu-73 binds ATP and competes with ATP-binding at Arg-209, thereby preventing adenylyltransferase activity. Activation dissociates ATP-binding from Glu-73, allowing ordered binding of the entire ATP moiety with the alpha-phosphate in an orientation that is productive for accepting an incoming target hydroxyl side chain. In terms of biological role, adenylyltransferase that mediates the addition of adenosine 5'-monophosphate (AMP) to specific residues of target proteins. The protein is Protein adenylyltransferase SoFic (fic) of Shewanella oneidensis (strain ATCC 700550 / JCM 31522 / CIP 106686 / LMG 19005 / NCIMB 14063 / MR-1).